Reading from the N-terminus, the 224-residue chain is Germin-like protein 8-11 (224 aa).

The first 22 residues, 1–22 (MASSSFLLLATLLAMASWQGMA), serve as a signal peptide directing secretion. Cysteine 32 and cysteine 47 are disulfide-bonded. The 151-residue stretch at 62 to 212 (AMLDTPRKTN…AFQVEKGTID (151 aa)) folds into the Cupin type-1 domain. The N-linked (GlcNAc...) asparagine glycan is linked to asparagine 76. Residues histidine 109, histidine 111, glutamate 116, and histidine 157 each coordinate Mn(2+).

It belongs to the germin family. In terms of assembly, oligomer (believed to be a pentamer but probably hexamer).

It localises to the secreted. Its subcellular location is the extracellular space. The protein localises to the apoplast. In terms of biological role, plays a role in broad-spectrum disease resistance. Probably has no oxalate oxidase activity even if the active site is conserved. This Oryza sativa subsp. japonica (Rice) protein is Germin-like protein 8-11.